The chain runs to 188 residues: Probable DNA-directed RNA polymerase subunit delta (188 aa).

The 70-residue stretch at L14–W83 folds into the HTH HARE-type domain. The segment at E119–E188 is disordered.

The protein belongs to the RpoE family. In terms of assembly, RNAP is composed of a core of 2 alpha, a beta and a beta' subunits. The core is associated with a delta subunit and one of several sigma factors.

Functionally, participates in both the initiation and recycling phases of transcription. In the presence of the delta subunit, RNAP displays an increased specificity of transcription, a decreased affinity for nucleic acids, and an increased efficiency of RNA synthesis because of enhanced recycling. This Streptococcus equi subsp. equi (strain 4047) protein is Probable DNA-directed RNA polymerase subunit delta.